The primary structure comprises 637 residues: Zinc-transporting ATPase (637 aa).

4 consecutive transmembrane segments (helical) span residues 43-63 (GWLLSGYQVLSIILFLLAFVI), 89-109 (IFAAIGSALIGYWAEGAILIF), 258-278 (GVLIAVALLLFVPHFALGWSW), and 286-306 (MVFMVVASPCALVASIMPAAL). Aspartate 337 functions as the 4-aspartylphosphate intermediate in the catalytic mechanism. Residues aspartate 535 and aspartate 539 each coordinate Mg(2+). Residues 599 to 619 (VICLLICANFLQAMELPFGVI) traverse the membrane as a helical segment.

The protein belongs to the cation transport ATPase (P-type) (TC 3.A.3) family. Type IB subfamily.

The protein localises to the cell membrane. The enzyme catalyses Zn(2+)(out) + ATP(in) + H2O(in) = Zn(2+)(in) + ADP(in) + phosphate(in) + H(+)(in). Functionally, couples the hydrolysis of ATP with the transport of zinc into the cell. Plays an important role in protecting cells against oxidative stress. ZosA-mediated zinc transport is required for post-transcriptional control of comK and competence development. The chain is Zinc-transporting ATPase (zosA) from Bacillus subtilis (strain 168).